Consider the following 360-residue polypeptide: Probable dual-specificity RNA methyltransferase RlmN (360 aa).

Glu91 acts as the Proton acceptor in catalysis. A Radical SAM core domain is found at 97–335; sequence QHYGQSVCVT…CVVRQEHGTD (239 aa). Cys104 and Cys340 form a disulfide bridge. 3 residues coordinate [4Fe-4S] cluster: Cys111, Cys115, and Cys118. S-adenosyl-L-methionine-binding positions include 163-164, Ser195, 218-220, and Asn296; these read GE and SLH. Cys340 (S-methylcysteine intermediate) is an active-site residue.

It belongs to the radical SAM superfamily. RlmN family. It depends on [4Fe-4S] cluster as a cofactor.

The protein localises to the cytoplasm. The catalysed reaction is adenosine(2503) in 23S rRNA + 2 reduced [2Fe-2S]-[ferredoxin] + 2 S-adenosyl-L-methionine = 2-methyladenosine(2503) in 23S rRNA + 5'-deoxyadenosine + L-methionine + 2 oxidized [2Fe-2S]-[ferredoxin] + S-adenosyl-L-homocysteine. It catalyses the reaction adenosine(37) in tRNA + 2 reduced [2Fe-2S]-[ferredoxin] + 2 S-adenosyl-L-methionine = 2-methyladenosine(37) in tRNA + 5'-deoxyadenosine + L-methionine + 2 oxidized [2Fe-2S]-[ferredoxin] + S-adenosyl-L-homocysteine. Specifically methylates position 2 of adenine 2503 in 23S rRNA and position 2 of adenine 37 in tRNAs. This Streptococcus equi subsp. equi (strain 4047) protein is Probable dual-specificity RNA methyltransferase RlmN.